The sequence spans 133 residues: MTTLRVLLAVCCAAYCILAEDVTVPANGELKLMPDQKAGGRLEGQWKISTPDHYYLIVSCGLWSSASGTCKDKILITQGGKTTEVCGEGKNSFYVQQDTNLNTAEIIILTNTPDARAMCTVYSAEKPKEENTF.

Residues 1-22 (MTTLRVLLAVCCAAYCILAEDV) form the signal peptide. A CUB domain is found at 23–125 (TVPANGELKL…RAMCTVYSAE (103 aa)). The cysteines at positions 70 and 86 are disulfide-linked.

Belongs to the venom CUB family. As to expression, expressed by the venom gland.

It localises to the secreted. In terms of biological role, may function as an antimicrobial peptide and may be related to the innate defense of the insect in the salivary glands. This chain is Triatox, found in Triatoma infestans (Assassin bug).